A 219-amino-acid chain; its full sequence is Guanylate kinase (219 aa).

One can recognise a Guanylate kinase-like domain in the interval 15 to 194; the sequence is GLMFVLSSPS…AFAEVQSILK (180 aa). 22 to 29 lines the ATP pocket; that stretch reads SPSGAGKT.

It belongs to the guanylate kinase family.

It localises to the cytoplasm. The enzyme catalyses GMP + ATP = GDP + ADP. Functionally, essential for recycling GMP and indirectly, cGMP. The protein is Guanylate kinase of Nitrobacter winogradskyi (strain ATCC 25391 / DSM 10237 / CIP 104748 / NCIMB 11846 / Nb-255).